Consider the following 292-residue polypeptide: 4-hydroxy-tetrahydrodipicolinate synthase (292 aa).

Thr-45 lines the pyruvate pocket. Tyr-133 functions as the Proton donor/acceptor in the catalytic mechanism. Catalysis depends on Lys-161, which acts as the Schiff-base intermediate with substrate. Ile-203 contributes to the pyruvate binding site.

The protein belongs to the DapA family. In terms of assembly, homodimer.

Its subcellular location is the cytoplasm. The catalysed reaction is L-aspartate 4-semialdehyde + pyruvate = (2S,4S)-4-hydroxy-2,3,4,5-tetrahydrodipicolinate + H2O + H(+). It functions in the pathway amino-acid biosynthesis; L-lysine biosynthesis via DAP pathway; (S)-tetrahydrodipicolinate from L-aspartate: step 3/4. Its function is as follows. Catalyzes the condensation of (S)-aspartate-beta-semialdehyde [(S)-ASA] and pyruvate to 4-hydroxy-tetrahydrodipicolinate (HTPA). The protein is 4-hydroxy-tetrahydrodipicolinate synthase of Pseudomonas aeruginosa (strain ATCC 15692 / DSM 22644 / CIP 104116 / JCM 14847 / LMG 12228 / 1C / PRS 101 / PAO1).